Reading from the N-terminus, the 282-residue chain is Homeobox-leucine zipper protein HAT1 (282 aa).

The interval 71–134 is disordered; sequence LEEETGVSSP…EEDYGGETCR (64 aa). The segment covering 76 to 89 has biased composition (low complexity); that stretch reads GVSSPNSTISSTVS. A DNA-binding region (homeobox) is located at residues 132–191; that stretch reads TCRKKLRLSKDQSAVLEDTFKEHNTLNPKQKLALAKKLGLTARQVEVWFQNRRARTKLKQ. The interval 199–220 is leucine-zipper; it reads LKRCVEKLTEENRRLEKEAAEL.

Belongs to the HD-ZIP homeobox family. Class II subfamily. As to quaternary structure, interacts with BZIP30.

It is found in the nucleus. In terms of biological role, probable transcription factor. In Arabidopsis thaliana (Mouse-ear cress), this protein is Homeobox-leucine zipper protein HAT1 (HAT1).